Reading from the N-terminus, the 203-residue chain is MVEAPEQSETGRIEAFSDGVFAIAITLLVLEIKVPQHKIVETVGLVSSLLSLWPSYLAFLTSFASILVMWVNHHRIFSLVARTDHAFFYWNGLLLMLVTFVPFPTALLAEYLIHPQARVAASVYAGIFLAIAIVFNRLWKHAATADRLLAQKADRHEVDAITKQYRFGPGLYLVAFALSFISVWLSVGVCFVLAIYFALRSNA.

The Cytoplasmic portion of the chain corresponds to 1-7 (MVEAPEQ). The chain crosses the membrane as a helical span at residues 8 to 31 (SETGRIEAFSDGVFAIAITLLVLE). A RxxxFSD motif motif is present at residues 12-18 (RIEAFSD). The Extracellular portion of the chain corresponds to 32-52 (IKVPQHKIVETVGLVSSLLSL). The tract at residues 37–42 (HKIVET) is short helix H1. Residues 44 to 50 (GLVSSLL) form a short helix H2 region. Residues 53-78 (WPSYLAFLTSFASILVMWVNHHRIFS) traverse the membrane as a helical segment. At 79 to 84 (LVARTD) the chain is on the cytoplasmic side. Residues 85–110 (HAFFYWNGLLLMLVTFVPFPTALLAE) form a helical membrane-spanning segment. Over 111 to 117 (YLIHPQA) the chain is Extracellular. The helical transmembrane segment at 118–142 (RVAASVYAGIFLAIAIVFNRLWKHA) threads the bilayer. Residues 143 to 154 (ATADRLLAQKAD) are Cytoplasmic-facing. A helical membrane pass occupies residues 155–181 (RHEVDAITKQYRFGPGLYLVAFALSFI). Residues 182 to 183 (SV) are Extracellular-facing. A helical membrane pass occupies residues 184–199 (WLSVGVCFVLAIYFAL). The Cytoplasmic portion of the chain corresponds to 200–203 (RSNA).

It belongs to the TMEM175 family. In terms of assembly, homotetramer.

It is found in the membrane. It catalyses the reaction K(+)(in) = K(+)(out). Its function is as follows. Potassium channel. The channel is permeable for K(+), Rb(+) and Cs(+), while it is unable to conduct Na(+). This Chamaesiphon minutus (strain ATCC 27169 / PCC 6605) protein is Potassium channel Cha6605_3372.